The primary structure comprises 76 residues: Virulence-associated protein VagC (76 aa).

The SpoVT-AbrB domain maps to 4–45 (VSIFKNGNNRAIRLPRDLDFEGVSELEIVREGDSIILRPVRP).

Belongs to the VapB family.

The chain is Virulence-associated protein VagC (vagC) from Salmonella dublin.